A 265-amino-acid chain; its full sequence is PBSX phage terminase small subunit (265 aa).

The segment at 241-265 is disordered; it reads KQKAEKTDDSQEPIEIMIKRKERKS.

The protein to B.subtilis YqaS and B.subtilis phage SPP1 terminase small subunit. In terms of assembly, dimer of a small and a large subunit.

Functions as a terminase. The sequence is that of PBSX phage terminase small subunit (xtmA) from Bacillus subtilis (strain 168).